Here is a 358-residue protein sequence, read N- to C-terminus: 3-dehydroquinate synthase (358 aa).

Residues 75-80 (SGEGSK), 109-113 (GVLGD), 133-134 (TT), Lys146, and Lys155 each bind NAD(+). Residues Glu188, His245, and His262 each coordinate Zn(2+).

This sequence belongs to the sugar phosphate cyclases superfamily. Dehydroquinate synthase family. It depends on Co(2+) as a cofactor. Zn(2+) is required as a cofactor. NAD(+) serves as cofactor.

The protein resides in the cytoplasm. The catalysed reaction is 7-phospho-2-dehydro-3-deoxy-D-arabino-heptonate = 3-dehydroquinate + phosphate. It participates in metabolic intermediate biosynthesis; chorismate biosynthesis; chorismate from D-erythrose 4-phosphate and phosphoenolpyruvate: step 2/7. Its function is as follows. Catalyzes the conversion of 3-deoxy-D-arabino-heptulosonate 7-phosphate (DAHP) to dehydroquinate (DHQ). The sequence is that of 3-dehydroquinate synthase from Methylacidiphilum infernorum (isolate V4) (Methylokorus infernorum (strain V4)).